We begin with the raw amino-acid sequence, 316 residues long: 4-hydroxy-3-methylbut-2-enyl diphosphate reductase (316 aa).

Residue C12 participates in [4Fe-4S] cluster binding. 2 residues coordinate (2E)-4-hydroxy-3-methylbut-2-enyl diphosphate: H43 and H81. 2 residues coordinate dimethylallyl diphosphate: H43 and H81. Residues H43 and H81 each coordinate isopentenyl diphosphate. C103 provides a ligand contact to [4Fe-4S] cluster. Residue H131 participates in (2E)-4-hydroxy-3-methylbut-2-enyl diphosphate binding. H131 contacts dimethylallyl diphosphate. H131 provides a ligand contact to isopentenyl diphosphate. E133 functions as the Proton donor in the catalytic mechanism. Position 170 (T170) interacts with (2E)-4-hydroxy-3-methylbut-2-enyl diphosphate. C198 lines the [4Fe-4S] cluster pocket. (2E)-4-hydroxy-3-methylbut-2-enyl diphosphate is bound by residues S226, N228, and S271. Positions 226, 228, and 271 each coordinate dimethylallyl diphosphate. Isopentenyl diphosphate contacts are provided by S226, N228, and S271.

The protein belongs to the IspH family. It depends on [4Fe-4S] cluster as a cofactor.

It catalyses the reaction isopentenyl diphosphate + 2 oxidized [2Fe-2S]-[ferredoxin] + H2O = (2E)-4-hydroxy-3-methylbut-2-enyl diphosphate + 2 reduced [2Fe-2S]-[ferredoxin] + 2 H(+). The enzyme catalyses dimethylallyl diphosphate + 2 oxidized [2Fe-2S]-[ferredoxin] + H2O = (2E)-4-hydroxy-3-methylbut-2-enyl diphosphate + 2 reduced [2Fe-2S]-[ferredoxin] + 2 H(+). It participates in isoprenoid biosynthesis; dimethylallyl diphosphate biosynthesis; dimethylallyl diphosphate from (2E)-4-hydroxy-3-methylbutenyl diphosphate: step 1/1. Its pathway is isoprenoid biosynthesis; isopentenyl diphosphate biosynthesis via DXP pathway; isopentenyl diphosphate from 1-deoxy-D-xylulose 5-phosphate: step 6/6. Catalyzes the conversion of 1-hydroxy-2-methyl-2-(E)-butenyl 4-diphosphate (HMBPP) into a mixture of isopentenyl diphosphate (IPP) and dimethylallyl diphosphate (DMAPP). Acts in the terminal step of the DOXP/MEP pathway for isoprenoid precursor biosynthesis. In Bacillus cereus (strain B4264), this protein is 4-hydroxy-3-methylbut-2-enyl diphosphate reductase.